The following is a 305-amino-acid chain: Tyrosine recombinase XerC (305 aa).

The 92-residue stretch at 4–95 folds into the Core-binding (CB) domain; it reads TQIQELIIKW…AIKNFYKFLE (92 aa). Residues 116–298 enclose the Tyr recombinase domain; the sequence is LLPKALSEEE…SIKHLETAYV (183 aa). Residues arginine 159, lysine 182, histidine 250, arginine 253, and histidine 276 contribute to the active site. The active-site O-(3'-phospho-DNA)-tyrosine intermediate is tyrosine 285.

The protein belongs to the 'phage' integrase family. XerC subfamily. As to quaternary structure, forms a cyclic heterotetrameric complex composed of two molecules of XerC and two molecules of XerD.

It localises to the cytoplasm. In terms of biological role, site-specific tyrosine recombinase, which acts by catalyzing the cutting and rejoining of the recombining DNA molecules. The XerC-XerD complex is essential to convert dimers of the bacterial chromosome into monomers to permit their segregation at cell division. It also contributes to the segregational stability of plasmids. In Rickettsia bellii (strain OSU 85-389), this protein is Tyrosine recombinase XerC.